Reading from the N-terminus, the 135-residue chain is Ribonuclease P protein component 2 (135 aa).

It belongs to the eukaryotic/archaeal RNase P protein component 2 family. Consists of a catalytic RNA component and at least 4-5 protein subunits.

It localises to the cytoplasm. The enzyme catalyses Endonucleolytic cleavage of RNA, removing 5'-extranucleotides from tRNA precursor.. In terms of biological role, part of ribonuclease P, a protein complex that generates mature tRNA molecules by cleaving their 5'-ends. This Methanosarcina barkeri (strain Fusaro / DSM 804) protein is Ribonuclease P protein component 2.